Consider the following 515-residue polypeptide: Protein pid-4 (515 aa).

The segment at 496-515 (DRSPQKFKFPASGSYMKPAN) is disordered.

May interact with pid-2, app-1 and prmt-5.

It localises to the cytoplasm. It is found in the perinuclear region. The protein resides in the P-body. In terms of biological role, together with pid-5, it is involved in gene silencing mediated by a class of 21 nucleotide PIWI-interacting RNAs (piRNAs) that possess a uracil residue at the 5'-end (also called 21U-RNAs) and guide the Piwi protein prg-1 to its DNA targets for silencing. Together with pid-5, it is required for the biogenesis of secondary and tertiary 22G-siRNAs. Specifically, promotes the production of 22G-siRNAs from the 5' end of target mRNAs. Together with pid-5, plays a role in small RNA-directed transgenerational epigenetic inheritance (also called RNAe) over several generations and germline immortality. Together with pid-5, plays a role in the formation of liquid-like condensates in the cytoplasm called Z granules. This Caenorhabditis elegans protein is Protein pid-4.